The following is a 56-amino-acid chain: U4-myrmicitoxin-Tb1a (56 aa).

Residues 1–26 form the signal peptide; it reads MQPSYLLLTFAIIFVMVIMYSPAVEA. The propeptide occupies 27–40; it reads KAGADADADAHADA. Gly-53 bears the Glycine amide mark.

Contains 1 disulfide bond. In terms of tissue distribution, expressed by the venom gland.

It is found in the secreted. In terms of biological role, venom protein with unknown function. Does not induce paralysis when a high dose is administered by intrathoracic injection into the blowfly Lucilia caesar. This chain is U4-myrmicitoxin-Tb1a, found in Tetramorium bicarinatum (Tramp ant).